The primary structure comprises 506 residues: MDLAPRPLGRQHSKSQSAFAFDNTATSIAASTMKNELNHLASTVKDPLAKKAFQKEMDNFFSLFSRYLQEDARGSEINWDLVESPKPEQVVEYDTITEAGGLSRDYLNKLAVLKLNGGLGTTMGCVGPKSIIEVRDGNSFLDLSVRQIEHLNRKYNVNVPFVLMNSFNTDEATAKVIKKYEAHKIDILTFNQSRYPRVHKETLLPVPHTADSAIDEWYPPGHGDVFEALTNSGIIDTLIAQGKEYLFVSNIDNLGAVVDLNILNHMVETNAEYLMELTNKTKADVKGGTLIDYDGNVRLLEIAQVPPQHVEEFKSIKKFKYFNTNNLWFHLPSVKRVVNNHELSMEIIPNKKTIKHKGENINIIQLETAAGAAIRHFKNAHGVNVPRRRFLPVKTCSDLLLVKSDLYSINHGQVEMNPRRFGGTAPLVKLGAHFKKVADFSAHIPSIPKILELDHLTITGDVNIGRNVTLKGTVIIVASDANRIDIPNGSVLENCVITGNLNILEH.

Phosphoserine occurs at positions 15 and 17. Residues 115-118, lysine 129, glutamine 192, and glycine 221 each bind UTP; that span reads LNGG. 117 to 118 is a binding site for substrate; that stretch reads GG. Lysine 129 is a binding site for Mg(2+). Substrate contacts are provided by residues histidine 222 and 250-252; that span reads NID. UTP is bound by residues aspartate 252 and lysine 394. Aspartate 252 contacts Mg(2+). The active site involves lysine 394. Positions 455-506 are oligomerization; it reads HLTITGDVNIGRNVTLKGTVIIVASDANRIDIPNGSVLENCVITGNLNILEH.

The protein belongs to the UDPGP type 1 family. As to quaternary structure, homooctamer.

It localises to the cytoplasm. The protein resides in the nucleus. The enzyme catalyses alpha-D-glucose 1-phosphate + UTP + H(+) = UDP-alpha-D-glucose + diphosphate. Its function is as follows. Plays a central role as a glucosyl donor in cellular metabolic pathways. The chain is Probable UTP--glucose-1-phosphate uridylyltransferase (fyu1) from Schizosaccharomyces pombe (strain 972 / ATCC 24843) (Fission yeast).